The following is a 248-amino-acid chain: Adenylate kinase isoenzyme 6 homolog HBR1 (248 aa).

Residues glycine 19, glycine 21, lysine 22, serine 23, and serine 24 each coordinate ATP. Positions 49–72 (NISEIAKERDCIESYDAKLDTSIV) are NMPbind. The interval 124 to 134 (TRNYNDLKLQE) is LID. ATP is bound at residue arginine 125. Residues 188 to 248 (DGVSNELNKQ…EMEHTEDIAQ (61 aa)) form a disordered region. Positions 202-238 (DSSDEGDDNSDSDEYELEEDEQEEEEEREEYDEETNE) are enriched in acidic residues. The segment covering 239–248 (EMEHTEDIAQ) has biased composition (basic and acidic residues).

This sequence belongs to the adenylate kinase family. AK6 subfamily. In terms of assembly, interacts with small ribosomal subunit protein uS11. Not a structural component of 43S pre-ribosomes, but transiently interacts with them by binding to uS11.

The protein localises to the cytoplasm. It is found in the nucleus. It carries out the reaction AMP + ATP = 2 ADP. The enzyme catalyses ATP + H2O = ADP + phosphate + H(+). Functionally, broad-specificity nucleoside monophosphate (NMP) kinase that catalyzes the reversible transfer of the terminal phosphate group between nucleoside triphosphates and monophosphates. Also has ATPase activity. Involved in the late cytoplasmic maturation steps of the 40S ribosomal particles, specifically 18S rRNA maturation. While NMP activity is not required for ribosome maturation, ATPase activity is. Associates transiently with small ribosomal subunit protein uS11. ATP hydrolysis breaks the interaction with uS11. May temporarily remove uS11 from the ribosome to enable a conformational change of the ribosomal RNA that is needed for the final maturation step of the small ribosomal subunit. Its NMP activity may have a role in nuclear energy homeostasis. Induces transcription of mating-type proteins ALPHA1 and ALPHA2 and moderately represses transcription of mating-type protein A1 in response to hemoglobin and growth signals. Involved in the induction of a high affinity fibronectin receptor by sub-inhibitory dosages of caspofungin. This is Adenylate kinase isoenzyme 6 homolog HBR1 (HBR1) from Candida albicans (strain SC5314 / ATCC MYA-2876) (Yeast).